A 458-amino-acid chain; its full sequence is MSLFRSRQAKIHFVGVGGIGMSGIAEVLLNLGYTVSGSDLRESETTRRLAGLGGRISYGHAAENVLQVDVVVISSAVKRDNPEVLEARRRKIPVIPRAEMLAELMRLKYGVAIAGSHGKTTTTSMAAHLLAHAGLDPTAVVGGKVNAFGSNAKLGKGDYMVVEADESDGSFLRIPPTIAIVTNIDPEHLDHWKTPDALRRGFVDFVNRVPFYGLAILCIDHPTVQSILPDVEKRAVTYGESHQADYRAEAIELSGHAVRFDAFRRDEALGRFEVAMVGRHNALNALAVIALGDEMGIPPLVTREALRSFQGVQRRFTVRGEAAGVTVVDDYGHHPAEVKATLQGAREAFKRRVVCLFQPHRYTRTRDLMAEFATAFNDADVLLLTDIYAAGEEPIPGATAANLADAIRAWGHRDVTLVPRAELARAARERVRPGDLVLTLGAGDVTAAGPELLALLER.

115–121 (GSHGKTT) serves as a coordination point for ATP.

It belongs to the MurCDEF family.

It is found in the cytoplasm. It catalyses the reaction UDP-N-acetyl-alpha-D-muramate + L-alanine + ATP = UDP-N-acetyl-alpha-D-muramoyl-L-alanine + ADP + phosphate + H(+). It functions in the pathway cell wall biogenesis; peptidoglycan biosynthesis. Functionally, cell wall formation. This Anaeromyxobacter dehalogenans (strain 2CP-1 / ATCC BAA-258) protein is UDP-N-acetylmuramate--L-alanine ligase.